The chain runs to 362 residues: Protein RecA (362 aa).

77-84 (GPESSGKT) contacts ATP.

This sequence belongs to the RecA family.

Its subcellular location is the cytoplasm. Its function is as follows. Can catalyze the hydrolysis of ATP in the presence of single-stranded DNA, the ATP-dependent uptake of single-stranded DNA by duplex DNA, and the ATP-dependent hybridization of homologous single-stranded DNAs. It interacts with LexA causing its activation and leading to its autocatalytic cleavage. The chain is Protein RecA from Rhizobium etli (strain CIAT 652).